We begin with the raw amino-acid sequence, 181 residues long: Mitochondrial inner membrane protein Mpv17 (181 aa).

Transmembrane regions (helical) follow at residues 20–37, 51–67, 86–103, and 152–169; these read MCIA…AQYL, FSFL…FIWF, LCID…AILF, and VILN…LSYI.

The protein belongs to the peroxisomal membrane protein PXMP2/4 family.

It localises to the mitochondrion inner membrane. Functionally, involved in mitochondria homeostasis. This Caenorhabditis elegans protein is Mitochondrial inner membrane protein Mpv17.